A 311-amino-acid polypeptide reads, in one-letter code: Ornithine carbamoyltransferase (311 aa).

Residues Ser-54–Thr-57, Gln-81, Arg-105, and His-132–Gln-135 contribute to the carbamoyl phosphate site. Residues Asn-164, Asp-228, and Ser-232–Met-233 each bind L-ornithine. Residues Cys-268–Leu-269 and Arg-296 each bind carbamoyl phosphate.

The protein belongs to the aspartate/ornithine carbamoyltransferase superfamily. OTCase family.

Its subcellular location is the cytoplasm. The enzyme catalyses carbamoyl phosphate + L-ornithine = L-citrulline + phosphate + H(+). It participates in amino-acid biosynthesis; L-arginine biosynthesis; L-arginine from L-ornithine and carbamoyl phosphate: step 1/3. Reversibly catalyzes the transfer of the carbamoyl group from carbamoyl phosphate (CP) to the N(epsilon) atom of ornithine (ORN) to produce L-citrulline. The protein is Ornithine carbamoyltransferase of Renibacterium salmoninarum (strain ATCC 33209 / DSM 20767 / JCM 11484 / NBRC 15589 / NCIMB 2235).